A 204-amino-acid chain; its full sequence is Cobalt-containing nitrile hydratase subunit alpha (204 aa).

Residues C108, C111, S112, and C113 each contribute to the Co(2+) site. C111 is modified (cysteine sulfinic acid (-SO2H)). Cysteine sulfenic acid (-SOH) is present on C113.

It belongs to the nitrile hydratase subunit alpha family. As to quaternary structure, heterotetramer of two alpha and two beta chains. Co(2+) is required as a cofactor.

It catalyses the reaction an aliphatic primary amide = an aliphatic nitrile + H2O. In terms of biological role, NHase catalyzes the hydration of various nitrile compounds to the corresponding amides. In Pseudonocardia thermophila, this protein is Cobalt-containing nitrile hydratase subunit alpha.